Consider the following 501-residue polypeptide: Ribose import ATP-binding protein RbsA (501 aa).

ABC transporter domains follow at residues 5-241 (LQLK…VGRK) and 252-495 (APGD…VGKL). Position 37-44 (37-44 (GENGAGKS)) interacts with ATP.

This sequence belongs to the ABC transporter superfamily. Ribose importer (TC 3.A.1.2.1) family. The complex is composed of an ATP-binding protein (RbsA), two transmembrane proteins (RbsC) and a solute-binding protein (RbsB).

It localises to the cell inner membrane. It catalyses the reaction D-ribose(out) + ATP + H2O = D-ribose(in) + ADP + phosphate + H(+). Functionally, part of the ABC transporter complex RbsABC involved in ribose import. Responsible for energy coupling to the transport system. This is Ribose import ATP-binding protein RbsA from Escherichia coli (strain K12).